We begin with the raw amino-acid sequence, 196 residues long: 3-isopropylmalate dehydratase small subunit (196 aa).

The protein belongs to the LeuD family. LeuD type 1 subfamily. In terms of assembly, heterodimer of LeuC and LeuD.

It catalyses the reaction (2R,3S)-3-isopropylmalate = (2S)-2-isopropylmalate. The protein operates within amino-acid biosynthesis; L-leucine biosynthesis; L-leucine from 3-methyl-2-oxobutanoate: step 2/4. Functionally, catalyzes the isomerization between 2-isopropylmalate and 3-isopropylmalate, via the formation of 2-isopropylmaleate. The sequence is that of 3-isopropylmalate dehydratase small subunit from Corynebacterium efficiens (strain DSM 44549 / YS-314 / AJ 12310 / JCM 11189 / NBRC 100395).